The following is a 109-amino-acid chain: Large ribosomal subunit protein uL24 (109 aa).

It belongs to the universal ribosomal protein uL24 family. Part of the 50S ribosomal subunit.

In terms of biological role, one of two assembly initiator proteins, it binds directly to the 5'-end of the 23S rRNA, where it nucleates assembly of the 50S subunit. Its function is as follows. One of the proteins that surrounds the polypeptide exit tunnel on the outside of the subunit. The protein is Large ribosomal subunit protein uL24 of Mesoplasma florum (strain ATCC 33453 / NBRC 100688 / NCTC 11704 / L1) (Acholeplasma florum).